A 445-amino-acid chain; its full sequence is Methionine aminopeptidase 2 (445 aa).

The interval 1–80 is disordered; it reads MAAQVASGVG…TSKVQTEPPR (80 aa). Residues 57 to 71 are compositionally biased toward basic residues; sequence AKKKKKKTKKKKKGT. Histidine 195 lines the substrate pocket. Positions 215, 226, and 295 each coordinate a divalent metal cation. Substrate is bound at residue histidine 303. Glutamate 331 and glutamate 426 together coordinate a divalent metal cation.

This sequence belongs to the peptidase M24A family. Methionine aminopeptidase eukaryotic type 2 subfamily. The cofactor is Co(2+). Requires Zn(2+) as cofactor. Mn(2+) is required as a cofactor. Fe(2+) serves as cofactor.

It localises to the cytoplasm. It carries out the reaction Release of N-terminal amino acids, preferentially methionine, from peptides and arylamides.. In terms of biological role, cotranslationally removes the N-terminal methionine from nascent proteins. The N-terminal methionine is often cleaved when the second residue in the primary sequence is small and uncharged (Met-Ala-, Cys, Gly, Pro, Ser, Thr, or Val). This chain is Methionine aminopeptidase 2, found in Paracoccidioides brasiliensis (strain Pb18).